The sequence spans 406 residues: Glutamyl-tRNA reductase (406 aa).

Residues 50 to 53, serine 107, 112 to 114, and glutamine 118 each bind substrate; these read TCNR and EPQ. Cysteine 51 acts as the Nucleophile in catalysis. 187–192 serves as a coordination point for NADP(+); that stretch reads GAGEMG.

Belongs to the glutamyl-tRNA reductase family. Homodimer.

It catalyses the reaction (S)-4-amino-5-oxopentanoate + tRNA(Glu) + NADP(+) = L-glutamyl-tRNA(Glu) + NADPH + H(+). Its pathway is porphyrin-containing compound metabolism; protoporphyrin-IX biosynthesis; 5-aminolevulinate from L-glutamyl-tRNA(Glu): step 1/2. In terms of biological role, catalyzes the NADPH-dependent reduction of glutamyl-tRNA(Glu) to glutamate 1-semialdehyde (GSA). The sequence is that of Glutamyl-tRNA reductase from Aquifex aeolicus (strain VF5).